The sequence spans 146 residues: Probable actin-related protein 2/3 complex subunit 5 (146 aa).

Belongs to the ARPC5 family. In terms of assembly, component of the Arp2/3 complex composed of ARP2, ARP3, ARPC1B/p41-ARC, ARPC2/p34-ARC, ARPC3/p21-ARC, ARPC4/p20-ARC and ARPC5/p16-ARC.

It is found in the cytoplasm. Its subcellular location is the cytoskeleton. In terms of biological role, functions as a component of the Arp2/3 complex which is involved in regulation of actin polymerization and together with an activating nucleation-promoting factor (NPF) mediates the formation of branched actin networks. This chain is Probable actin-related protein 2/3 complex subunit 5, found in Caenorhabditis elegans.